The sequence spans 137 residues: Large-conductance mechanosensitive channel (137 aa).

2 helical membrane passes run 10-30 and 76-96; these read FAMR…AAFG and GTFI…FSAV.

The protein belongs to the MscL family. In terms of assembly, homopentamer.

The protein resides in the cell inner membrane. Its function is as follows. Channel that opens in response to stretch forces in the membrane lipid bilayer. May participate in the regulation of osmotic pressure changes within the cell. The polypeptide is Large-conductance mechanosensitive channel (Yersinia pseudotuberculosis serotype O:1b (strain IP 31758)).